The primary structure comprises 118 residues: Large ribosomal subunit protein bL19 (118 aa).

Belongs to the bacterial ribosomal protein bL19 family.

Functionally, this protein is located at the 30S-50S ribosomal subunit interface and may play a role in the structure and function of the aminoacyl-tRNA binding site. The sequence is that of Large ribosomal subunit protein bL19 from Wolinella succinogenes (strain ATCC 29543 / DSM 1740 / CCUG 13145 / JCM 31913 / LMG 7466 / NCTC 11488 / FDC 602W) (Vibrio succinogenes).